We begin with the raw amino-acid sequence, 571 residues long: Proline--tRNA ligase (571 aa).

The protein belongs to the class-II aminoacyl-tRNA synthetase family. ProS type 1 subfamily. As to quaternary structure, homodimer.

It localises to the cytoplasm. The enzyme catalyses tRNA(Pro) + L-proline + ATP = L-prolyl-tRNA(Pro) + AMP + diphosphate. Catalyzes the attachment of proline to tRNA(Pro) in a two-step reaction: proline is first activated by ATP to form Pro-AMP and then transferred to the acceptor end of tRNA(Pro). As ProRS can inadvertently accommodate and process non-cognate amino acids such as alanine and cysteine, to avoid such errors it has two additional distinct editing activities against alanine. One activity is designated as 'pretransfer' editing and involves the tRNA(Pro)-independent hydrolysis of activated Ala-AMP. The other activity is designated 'posttransfer' editing and involves deacylation of mischarged Ala-tRNA(Pro). The misacylated Cys-tRNA(Pro) is not edited by ProRS. This is Proline--tRNA ligase from Shewanella baltica (strain OS155 / ATCC BAA-1091).